Reading from the N-terminus, the 350-residue chain is Histidinol-phosphate aminotransferase 1 (350 aa).

Lys-210 carries the post-translational modification N6-(pyridoxal phosphate)lysine.

The protein belongs to the class-II pyridoxal-phosphate-dependent aminotransferase family. Histidinol-phosphate aminotransferase subfamily. In terms of assembly, homodimer. It depends on pyridoxal 5'-phosphate as a cofactor.

The catalysed reaction is L-histidinol phosphate + 2-oxoglutarate = 3-(imidazol-4-yl)-2-oxopropyl phosphate + L-glutamate. It functions in the pathway amino-acid biosynthesis; L-histidine biosynthesis; L-histidine from 5-phospho-alpha-D-ribose 1-diphosphate: step 7/9. The chain is Histidinol-phosphate aminotransferase 1 from Pseudomonas fluorescens (strain ATCC BAA-477 / NRRL B-23932 / Pf-5).